A 77-amino-acid polypeptide reads, in one-letter code: Acyl carrier protein (77 aa).

The Carrier domain maps to 2 to 77; the sequence is STIEERVKKV…EAIDYVVAHQ (76 aa). Serine 37 is subject to O-(pantetheine 4'-phosphoryl)serine.

This sequence belongs to the acyl carrier protein (ACP) family. Post-translationally, 4'-phosphopantetheine is transferred from CoA to a specific serine of apo-ACP by AcpS. This modification is essential for activity because fatty acids are bound in thioester linkage to the sulfhydryl of the prosthetic group.

The protein resides in the cytoplasm. It participates in lipid metabolism; fatty acid biosynthesis. Functionally, carrier of the growing fatty acid chain in fatty acid biosynthesis. The polypeptide is Acyl carrier protein (Chromohalobacter salexigens (strain ATCC BAA-138 / DSM 3043 / CIP 106854 / NCIMB 13768 / 1H11)).